We begin with the raw amino-acid sequence, 232 residues long: 5'-methylthioadenosine/S-adenosylhomocysteine nucleosidase (232 aa).

E12 functions as the Proton acceptor in the catalytic mechanism. Residues G78, V152, and 173-174 (ME) contribute to the substrate site. The Proton donor role is filled by D197.

This sequence belongs to the PNP/UDP phosphorylase family. MtnN subfamily. Homodimer.

It carries out the reaction S-adenosyl-L-homocysteine + H2O = S-(5-deoxy-D-ribos-5-yl)-L-homocysteine + adenine. It catalyses the reaction S-methyl-5'-thioadenosine + H2O = 5-(methylsulfanyl)-D-ribose + adenine. The catalysed reaction is 5'-deoxyadenosine + H2O = 5-deoxy-D-ribose + adenine. The protein operates within amino-acid biosynthesis; L-methionine biosynthesis via salvage pathway; S-methyl-5-thio-alpha-D-ribose 1-phosphate from S-methyl-5'-thioadenosine (hydrolase route): step 1/2. Its function is as follows. Catalyzes the irreversible cleavage of the glycosidic bond in both 5'-methylthioadenosine (MTA) and S-adenosylhomocysteine (SAH/AdoHcy) to adenine and the corresponding thioribose, 5'-methylthioribose and S-ribosylhomocysteine, respectively. Also cleaves 5'-deoxyadenosine, a toxic by-product of radical S-adenosylmethionine (SAM) enzymes, into 5-deoxyribose and adenine. Thus, is required for in vivo function of the radical SAM enzymes biotin synthase and lipoic acid synthase, that are inhibited by 5'-deoxyadenosine accumulation. The sequence is that of 5'-methylthioadenosine/S-adenosylhomocysteine nucleosidase from Buchnera aphidicola subsp. Acyrthosiphon pisum (strain 5A).